Consider the following 353-residue polypeptide: Histidinol-phosphate aminotransferase (353 aa).

Residue K214 is modified to N6-(pyridoxal phosphate)lysine.

It belongs to the class-II pyridoxal-phosphate-dependent aminotransferase family. Histidinol-phosphate aminotransferase subfamily. As to quaternary structure, homodimer. Requires pyridoxal 5'-phosphate as cofactor.

It carries out the reaction L-histidinol phosphate + 2-oxoglutarate = 3-(imidazol-4-yl)-2-oxopropyl phosphate + L-glutamate. Its pathway is amino-acid biosynthesis; L-histidine biosynthesis; L-histidine from 5-phospho-alpha-D-ribose 1-diphosphate: step 7/9. In Gloeobacter violaceus (strain ATCC 29082 / PCC 7421), this protein is Histidinol-phosphate aminotransferase.